The chain runs to 195 residues: Probable GTP-binding protein EngB (195 aa).

The EngB-type G domain occupies 24-195 (ELPEIALAGR…EAWDAILEKL (172 aa)). Residues 32–39 (GRSNVGKS), 59–63 (GKTQL), 77–80 (DVPG), 144–147 (TKAD), and 176–178 (FSS) each bind GTP. Mg(2+)-binding residues include serine 39 and threonine 61.

This sequence belongs to the TRAFAC class TrmE-Era-EngA-EngB-Septin-like GTPase superfamily. EngB GTPase family. It depends on Mg(2+) as a cofactor.

Functionally, necessary for normal cell division and for the maintenance of normal septation. The sequence is that of Probable GTP-binding protein EngB from Streptococcus pneumoniae serotype 4 (strain ATCC BAA-334 / TIGR4).